The sequence spans 160 residues: Eukaryotic translation initiation factor 5A (160 aa).

The span at 1–13 (MSDSEEHHFESKA) shows a compositional bias: basic and acidic residues. The interval 1-22 (MSDSEEHHFESKADAGASKTYP) is disordered. Lys-53 carries the post-translational modification Hypusine.

Belongs to the eIF-5A family. Post-translationally, lys-53 undergoes hypusination, a unique post-translational modification that consists in the addition of a butylamino group from spermidine to lysine side chain, leading to the formation of the unusual amino acid hypusine. eIF-5As are the only known proteins to undergo this modification, which is essential for their function.

Translation factor that promotes translation elongation and termination, particularly upon ribosome stalling at specific amino acid sequence contexts. Binds between the exit (E) and peptidyl (P) site of the ribosome and promotes rescue of stalled ribosome: specifically required for efficient translation of polyproline-containing peptides as well as other motifs that stall the ribosome. Acts as a ribosome quality control (RQC) cofactor by joining the RQC complex to facilitate peptidyl transfer during CAT tailing step. The chain is Eukaryotic translation initiation factor 5A (TIF5A) from Zea mays (Maize).